Consider the following 202-residue polypeptide: MKVLTARQQQVYDLIRDHIAQTGMPPTRAEIAQQLGFRSPNAAEEHLKALARKGVIEIVSGASRGIRLLMEEETGIPLVGRVAAGEPLLAQEHIECRYQVDPAMFKPSADFLLRVSGMSMKNIGIMDGDLLAVHKTEDVRNGQIVVARIDDEVTVKRLKKQGNTVHLLAENEEFAPIVVDLRQQSFSIEGLAVGVIRNSDWS.

Residues 28–48 constitute a DNA-binding region (H-T-H motif); it reads RAEIAQQLGFRSPNAAEEHLK. Residues S119 and K156 each act as for autocatalytic cleavage activity in the active site.

The protein belongs to the peptidase S24 family. Homodimer.

The catalysed reaction is Hydrolysis of Ala-|-Gly bond in repressor LexA.. Represses a number of genes involved in the response to DNA damage (SOS response), including recA and lexA. Binds to the 16 bp palindromic sequence 5'-CTGTATATATATACAG-3'. In the presence of single-stranded DNA, RecA interacts with LexA causing an autocatalytic cleavage which disrupts the DNA-binding part of LexA, leading to derepression of the SOS regulon and eventually DNA repair. The chain is LexA repressor from Pectobacterium carotovorum subsp. carotovorum (Erwinia carotovora subsp. carotovora).